We begin with the raw amino-acid sequence, 961 residues long: Retinoblastoma-like protein homolog lin-35 (961 aa).

2 disordered regions span residues 1 to 43 (MPKR…PPAK) and 55 to 129 (GGVQ…TPPP). Residues 68–81 (ELTQMTIKQETEGN) are compositionally biased toward polar residues. The span at 107 to 119 (GEDDDYEEDDADS) shows a compositional bias: acidic residues. Phosphoserine; by CDK4 is present on Ser-714. A Phosphothreonine; by CDK4 modification is found at Thr-719.

It belongs to the retinoblastoma protein (RB) family. As to quaternary structure, component of the DRM complex, at least composed of lin-9, lin-35, lin-37, lin-52, lin-53, lin-54, dpl-1 and efl-1. Interacts with lin-53. Interacts (via C-terminus) with dpl-1 (via C-terminus) and efl-1 (via C-terminus). Interacts (via C-terminus) with lin-8. In terms of processing, phosphorylated by the cyclin dependent kinase cdk-4. Phosphorylation inhibits the transcriptional repressor activity of lin-35 and allows for progression through the G1 phase of the cell cycle during postembryonic development.

It localises to the nucleus. Key regulator of cell division which acts as a transcriptional repressor and negatively regulates cell cycle progression in its active unphosphorylated form, but allows cell cycle progression when phosphorylated. When unphosphorylated and in its active form, interacts with E2F transcription factors such as efl-1 to repress their transcriptional activity and negatively regulate the progression through the G1 phase of the cell cycle during postembryonic development. May furthermore act with cell cycle regulator cki-1 to negatively regulate cell cycle progression. Acts redundantly with lin-53, fzr-1 and lin-23 to control cell cycle progression by regulating the expression of G1 phase cyclins. In particular, negatively regulates the expression of the cyclin E homolog cye-1, which is essential for the G1/S phase transition. Regulates cell division in the intestinal lineage, repressing the expression of genes such as cdc-25.2, which are required for intestinal cells to transition from the karyokinesis cell cycle (also known as nuclear division) to endoreplication, a specific growth pathway in the intestinal epithelium required for feeding and gut development in growing larvae during the L1 stage molt. Its role as a transcriptional repressor in the regulation of intestinal cell division during postembryonic development is most likely in complex with an E2F cell cycle regulatory transcription factor efl-1 and its binding partner the synthetic multivulva class B protein dpl-1. Synthetic multivulva (synMuv) class B protein. SynMuv proteins are required to repress the induction of vulval development by Ras signaling and probably act by forming the multiprotein DRM complex that represses transcription. Together with synMuv class B protein lin-53, and redundantly with synMuv class A protein lin-15A, represses transcription to control vulval development, most likely through antagonization of the Ras-signaling pathway in the major hypodermal syncytium hyp7. Acts redundantly with the transcriptional corepressor spr-1 and the zinc finger protein zfp-2 to play a role in vulval morphogenesis, promote germline proliferation and somatic gonad development. Acts redundantly with ubc-18 in the regulation of pharyngeal morphogenesis during embryonic development by negatively regulating the expression of proteins such as sup-35. Functions with the SWI/SNF complex and proteins such as pha-1 to regulate larval development. Functions redundantly with xnp-1 to regulate somatic gonad development. Acts redundantly with slr-2 to regulate the expression of intestinal genes required for nutrient utilization. Regulates transcription in response to starvation. Furthermore, in response to starvation, promotes germ cell programmed cell death by negatively regulating the expression of the anti-apoptotic protein ced-9. Conversely, in conjunction with mcd-1, efl-1 and the synthetic multivulva class B proteins dpl-1, lin-37 and lin-52, may also regulate transcription to promote programmed cell death independently of ced-1, ced-8 and ced-9 cell death pathways. Directly involved in heterochromatin formation by maintaining overall chromatin structure and, in particular, that of constitutive heterochromatin by stabilizing histone methylation. In particular, negatively regulates the expression of mes-4, a histone methyltransferase that controls the expression of germline specific genes. May play a role in double strand break formation during meiosis. May suppress sensitivity to RNAi. May play a role in the response to endoplasmic reticulum (ER) stress. The polypeptide is Retinoblastoma-like protein homolog lin-35 (Caenorhabditis elegans).